Reading from the N-terminus, the 297-residue chain is 5'-3' exonuclease (297 aa).

In terms of domain architecture, 5'-3' exonuclease spans 171–262 (EPDQIVDFKA…MKLEKELFAI (92 aa)).

Its function is as follows. 5'-3' exonuclease acting preferentially on double-stranded DNA. This Mycoplasmopsis pulmonis (strain UAB CTIP) (Mycoplasma pulmonis) protein is 5'-3' exonuclease (polA).